Reading from the N-terminus, the 118-residue chain is V-type proton ATPase subunit G 3 (118 aa).

Positions 1 to 34 (MTSQSQGIHQLLQAEKRAKDKLEEAKKRKGKRLK) are disordered. A coiled-coil region spans residues 5 to 54 (SQGIHQLLQAEKRAKDKLEEAKKRKGKRLKQAKEEAMVEIDQYRMQRDKE). A compositionally biased stretch (basic and acidic residues) spans 14 to 26 (AEKRAKDKLEEAK).

Belongs to the V-ATPase G subunit family. V-ATPase is a heteromultimeric enzyme made up of two complexes: the ATP-hydrolytic V1 complex and the proton translocation V0 complex. The V1 complex consists of three catalytic AB heterodimers that form a heterohexamer, three peripheral stalks each consisting of EG heterodimers, one central rotor including subunits D and F, and the regulatory subunits C and H. The proton translocation complex V0 consists of the proton transport subunit a, a ring of proteolipid subunits c9c'', rotary subunit d, subunits e and f, and the accessory subunits ATP6AP1/Ac45 and ATP6AP2/PRR. In terms of tissue distribution, kidney.

Subunit of the V1 complex of vacuolar(H+)-ATPase (V-ATPase), a multisubunit enzyme composed of a peripheral complex (V1) that hydrolyzes ATP and a membrane integral complex (V0) that translocates protons. V-ATPase is responsible for acidifying and maintaining the pH of intracellular compartments and in some cell types, is targeted to the plasma membrane, where it is responsible for acidifying the extracellular environment. The polypeptide is V-type proton ATPase subunit G 3 (ATP6V1G3) (Homo sapiens (Human)).